The sequence spans 221 residues: Thiopurine S-methyltransferase (221 aa).

S-adenosyl-L-methionine-binding residues include tryptophan 12, leucine 47, glutamate 68, and arginine 125.

The protein belongs to the class I-like SAM-binding methyltransferase superfamily. TPMT family.

It localises to the cytoplasm. The enzyme catalyses S-adenosyl-L-methionine + a thiopurine = S-adenosyl-L-homocysteine + a thiopurine S-methylether.. This is Thiopurine S-methyltransferase from Legionella pneumophila subsp. pneumophila (strain Philadelphia 1 / ATCC 33152 / DSM 7513).